The sequence spans 876 residues: Alanine--tRNA ligase (876 aa).

K74 carries the N6-acetyllysine modification. Zn(2+)-binding residues include H564, H568, C666, and H670.

The protein belongs to the class-II aminoacyl-tRNA synthetase family. Homotetramer. Requires Zn(2+) as cofactor.

It is found in the cytoplasm. The enzyme catalyses tRNA(Ala) + L-alanine + ATP = L-alanyl-tRNA(Ala) + AMP + diphosphate. In terms of biological role, catalyzes the attachment of alanine to tRNA(Ala) in a two-step reaction: alanine is first activated by ATP to form Ala-AMP and then transferred to the acceptor end of tRNA(Ala). Also edits incorrectly charged Ser-tRNA(Ala) and Gly-tRNA(Ala) via its editing domain. The polypeptide is Alanine--tRNA ligase (Shigella flexneri serotype 5b (strain 8401)).